We begin with the raw amino-acid sequence, 151 residues long: Putative pre-16S rRNA nuclease (151 aa).

It belongs to the YqgF nuclease family.

The protein localises to the cytoplasm. Could be a nuclease involved in processing of the 5'-end of pre-16S rRNA. This Prochlorococcus marinus subsp. pastoris (strain CCMP1986 / NIES-2087 / MED4) protein is Putative pre-16S rRNA nuclease.